A 225-amino-acid chain; its full sequence is ATP-dependent dethiobiotin synthetase BioD (225 aa).

12–17 (GVGKTV) contributes to the ATP binding site. Mg(2+) is bound at residue Thr16. Lys37 is a catalytic residue. Thr41 is a substrate binding site. ATP is bound by residues Asp46, 105-108 (EGAG), 166-167 (GS), and 196-198 (PEG). Asp46 and Glu105 together coordinate Mg(2+).

Belongs to the dethiobiotin synthetase family. In terms of assembly, homodimer. Mg(2+) is required as a cofactor.

The protein localises to the cytoplasm. It catalyses the reaction (7R,8S)-7,8-diammoniononanoate + CO2 + ATP = (4R,5S)-dethiobiotin + ADP + phosphate + 3 H(+). The protein operates within cofactor biosynthesis; biotin biosynthesis; biotin from 7,8-diaminononanoate: step 1/2. Its function is as follows. Catalyzes a mechanistically unusual reaction, the ATP-dependent insertion of CO2 between the N7 and N8 nitrogen atoms of 7,8-diaminopelargonic acid (DAPA, also called 7,8-diammoniononanoate) to form a ureido ring. The protein is ATP-dependent dethiobiotin synthetase BioD of Mycobacteroides abscessus (strain ATCC 19977 / DSM 44196 / CCUG 20993 / CIP 104536 / JCM 13569 / NCTC 13031 / TMC 1543 / L948) (Mycobacterium abscessus).